Consider the following 387-residue polypeptide: 3-ketoacyl-CoA thiolase (387 aa).

The active-site Acyl-thioester intermediate is cysteine 91. Catalysis depends on proton acceptor residues histidine 343 and cysteine 373.

It belongs to the thiolase-like superfamily. Thiolase family. Heterotetramer of two alpha chains (FadB) and two beta chains (FadA).

The protein localises to the cytoplasm. It catalyses the reaction an acyl-CoA + acetyl-CoA = a 3-oxoacyl-CoA + CoA. It participates in lipid metabolism; fatty acid beta-oxidation. Its function is as follows. Catalyzes the final step of fatty acid oxidation in which acetyl-CoA is released and the CoA ester of a fatty acid two carbons shorter is formed. The sequence is that of 3-ketoacyl-CoA thiolase from Photobacterium profundum (strain SS9).